The following is a 1177-amino-acid chain: MDEEGAPLSESVQVVDPDVRAHVYSLVTALGGFNGESADRYVLGDDALACLRDIKRWLKLYDEKNNRMDVARCLGEANLVNGDLLPILTLWSTSGQKSKHMSRIALACLELLVPLTWPLEVPSKMTVNHHRHTPYLQQAQVLYKRGILSHGSDSILRTIIRIGLPSMAVPRSERTTRDEGILKLMLYFLRNIAVISPNARLAAEGDEEETSRSATINAFQNQDAFALLLTMCSNVGEDFSLQDVVLLEILFHIVKGVNVEKLFMNDAQRKAKRTDELGELLQKESSLRREYAKNAPTRHGRFGTMIWVKRDDAKVSTVSGQDVLKDSQTTLHKMDQSKKWNKPQIRRRAAEVTANNDFNTPVNLNSTATKNLRMFVEEFLDSGFNPLFTHVRKAIEREADRVLDINTRQFFYTVAWFLEAERVRRAHQREKRHLGDKSLNEIEPDSFALVASVLNQETFVFLNRSMQYSYDNKDVEDLTAEMRCFTQILLTVQEMAQSPLEEDQEIADNIQNRIFYEETTHDRIIAIVRGYKDQGFGYLDACTELAHVFLKMLEHYSKENVDMHIRSRRRAKRKAKQAKQADIEGDDEEQASEEEDLMDAERISKERKFDFKRFAAKFCNQSCVDTFIAFTKYYKELNVDQLKRAHRYFYRIAFKQEMSVLLFRLDIINLFYRMIKGPGALDSNKPIFKEWEELVRQIIRRMVKKIDQRPALITELLFSKINSTVFYLEYGHEKQTISASKRPPAELEVDPREAKTTDEKIKIVVHVMVKDEHTDLVKWVSDVLNSAADEREAWESQEQHSEGQKAPNPMIPVKSNNESCQKAMFSNAKLRLLMTLVRFERLGMEDVPGASWIVPSSLTSQDLRHTRSMIEQCLTEPVTESSDRDLSQLIRRKSGNNTRRDRDDQTADVDFGSDSEGDDNVPDGPLFPPNPRSRASALEQLKKQRKKRRKQAGEEEEPDEEDLEGRRRARLENALARQAKIKSDLYIHASDEQTDEEADQEFFRLEEQRRKEQAERIRKALLHGVVEEASENSRKKGSGRKRQSDQHTASTADSQSKRQRRQQRTGGLDDDDDLVMTGTDARSPDSLGQGSPSLQGANDVEDTPVTSEENELDFDDDLAFSRNRNRDKVLSAENDDSDTEPPAPDTIDEDDDDEAAPVAAPPRRRMRAGFVIESDSE.

4 disordered regions span residues 575–597 (AKQA…EEDL), 791–815 (REAW…PVKS), 874–1001 (LTEP…ADQE), and 1021–1177 (LLHG…SDSE). Residues 583–597 (IEGDDEEQASEEEDL) show a composition bias toward acidic residues. Basic and acidic residues predominate over residues 791 to 803 (REAWESQEQHSEG). 2 stretches are compositionally biased toward acidic residues: residues 911–921 (FGSDSEGDDNV) and 954–963 (EEEEPDEEDL). The segment covering 981–991 (IKSDLYIHASD) has biased composition (basic and acidic residues). Positions 1086-1096 (SLGQGSPSLQG) are enriched in polar residues. Acidic residues-rich tracts occupy residues 1108–1118 (EENELDFDDDL) and 1146–1155 (TIDEDDDDEA).

This sequence belongs to the timeless family. Component of the fork protection complex (FPC) consisting of tof1 and csm3.

It is found in the nucleus. In terms of biological role, forms a fork protection complex (FPC) with csm3 and which is required for chromosome segregation during meiosis and DNA damage repair. FPC coordinates leading and lagging strand synthesis and moves with the replication fork. FPC stabilizes replication forks in a configuration that is recognized by replication checkpoint sensors. The polypeptide is Topoisomerase 1-associated factor 1 (tof1) (Neosartorya fischeri (strain ATCC 1020 / DSM 3700 / CBS 544.65 / FGSC A1164 / JCM 1740 / NRRL 181 / WB 181) (Aspergillus fischerianus)).